A 244-amino-acid polypeptide reads, in one-letter code: MFKTLAADFRIIFERDPAARNGLEVLLCYPGFQALVCHRVAHWLYQQRLPVIPRLLSHLSRLLTGVEIHPGARLGQGIFIDHGMGVVIGETAIVGDYCLIYQGVTLGGTGKQSGKRHPTLANNVVVGAGAKVLGNIQIGENVRIGAGSVVLRDVPSDCTVVGIPGRVIYRSGVRVDPLDHSQMPDSEARVIRMLLDRIEALEDQLEGLNLPPAEEAIDVTLAPVGDRCQLRDRTIEEFLDGAGI.

Belongs to the transferase hexapeptide repeat family.

It localises to the cytoplasm. It carries out the reaction L-serine + acetyl-CoA = O-acetyl-L-serine + CoA. It participates in amino-acid biosynthesis; L-cysteine biosynthesis; L-cysteine from L-serine: step 1/2. This chain is Serine acetyltransferase (cysE), found in Synechococcus elongatus (strain ATCC 33912 / PCC 7942 / FACHB-805) (Anacystis nidulans R2).